The chain runs to 711 residues: Polyribonucleotide nucleotidyltransferase (711 aa).

Mg(2+) is bound by residues Asp490 and Asp496. In terms of domain architecture, KH spans 556–615 (PRIETMQVPTDKIREVIGSGGKVIREIVEVSGAKVDINDDGVIKIASANGEAIQKAYDMI). The region spanning 625-693 (GAVYTGKVVK…DRGKVRLSMK (69 aa)) is the S1 motif domain.

The protein belongs to the polyribonucleotide nucleotidyltransferase family. It depends on Mg(2+) as a cofactor.

It localises to the cytoplasm. It carries out the reaction RNA(n+1) + phosphate = RNA(n) + a ribonucleoside 5'-diphosphate. In terms of biological role, involved in mRNA degradation. Catalyzes the phosphorolysis of single-stranded polyribonucleotides processively in the 3'- to 5'-direction. The polypeptide is Polyribonucleotide nucleotidyltransferase (Ruegeria sp. (strain TM1040) (Silicibacter sp.)).